The following is a 459-amino-acid chain: Probable acetate kinase (459 aa).

N9 is a binding site for Mg(2+). K16 contributes to the ATP binding site. R100 contributes to the substrate binding site. Residue D156 is the Proton donor/acceptor of the active site. ATP contacts are provided by residues 216–220 and 299–301; these read HLGSG and DFR. The interval 308 to 338 is disordered; the sequence is TTTSSPTPSPNPNPNPNPDPNPDPNPDPQNQ. Positions 314–334 are enriched in pro residues; sequence TPSPNPNPNPNPDPNPDPNPD. Mg(2+) is bound at residue E441.

This sequence belongs to the acetokinase family. Mg(2+) serves as cofactor.

It carries out the reaction acetate + ATP = acetyl phosphate + ADP. It functions in the pathway metabolic intermediate biosynthesis; acetyl-CoA biosynthesis; acetyl-CoA from acetate: step 1/2. The polypeptide is Probable acetate kinase (Chaetomium globosum (strain ATCC 6205 / CBS 148.51 / DSM 1962 / NBRC 6347 / NRRL 1970) (Soil fungus)).